A 392-amino-acid chain; its full sequence is ATP phosphoribosyltransferase regulatory subunit (392 aa).

The protein belongs to the class-II aminoacyl-tRNA synthetase family. HisZ subfamily. As to quaternary structure, heteromultimer composed of HisG and HisZ subunits.

Its subcellular location is the cytoplasm. It participates in amino-acid biosynthesis; L-histidine biosynthesis; L-histidine from 5-phospho-alpha-D-ribose 1-diphosphate: step 1/9. Required for the first step of histidine biosynthesis. May allow the feedback regulation of ATP phosphoribosyltransferase activity by histidine. This Geobacillus sp. (strain WCH70) protein is ATP phosphoribosyltransferase regulatory subunit.